The sequence spans 474 residues: UDP-N-acetylmuramoyl-L-alanyl-D-glutamate--2,6-diaminopimelate ligase (474 aa).

Residue Ser-21 participates in UDP-N-acetyl-alpha-D-muramoyl-L-alanyl-D-glutamate binding. 93–99 (GTNGKSS) lines the ATP pocket. UDP-N-acetyl-alpha-D-muramoyl-L-alanyl-D-glutamate is bound by residues 139–140 (TT), Ser-166, Gln-172, and Arg-174. The residue at position 206 (Lys-206) is an N6-carboxylysine. Meso-2,6-diaminopimelate contacts are provided by residues Arg-367, 391-394 (DNPR), Gly-441, and Glu-445. Positions 391 to 394 (DNPR) match the Meso-diaminopimelate recognition motif motif.

This sequence belongs to the MurCDEF family. MurE subfamily. It depends on Mg(2+) as a cofactor. Carboxylation is probably crucial for Mg(2+) binding and, consequently, for the gamma-phosphate positioning of ATP.

The protein localises to the cytoplasm. It catalyses the reaction UDP-N-acetyl-alpha-D-muramoyl-L-alanyl-D-glutamate + meso-2,6-diaminopimelate + ATP = UDP-N-acetyl-alpha-D-muramoyl-L-alanyl-gamma-D-glutamyl-meso-2,6-diaminopimelate + ADP + phosphate + H(+). It participates in cell wall biogenesis; peptidoglycan biosynthesis. In terms of biological role, catalyzes the addition of meso-diaminopimelic acid to the nucleotide precursor UDP-N-acetylmuramoyl-L-alanyl-D-glutamate (UMAG) in the biosynthesis of bacterial cell-wall peptidoglycan. In Rickettsia bellii (strain RML369-C), this protein is UDP-N-acetylmuramoyl-L-alanyl-D-glutamate--2,6-diaminopimelate ligase.